Here is a 214-residue protein sequence, read N- to C-terminus: tRNA (guanine-N(7)-)-methyltransferase (214 aa).

Glu43, Glu68, Asp95, and Asp117 together coordinate S-adenosyl-L-methionine. Asp117 is a catalytic residue. Substrate is bound by residues Lys121, Asp153, and 190–193; that span reads TEYE.

It belongs to the class I-like SAM-binding methyltransferase superfamily. TrmB family.

The catalysed reaction is guanosine(46) in tRNA + S-adenosyl-L-methionine = N(7)-methylguanosine(46) in tRNA + S-adenosyl-L-homocysteine. The protein operates within tRNA modification; N(7)-methylguanine-tRNA biosynthesis. Its function is as follows. Catalyzes the formation of N(7)-methylguanine at position 46 (m7G46) in tRNA. The polypeptide is tRNA (guanine-N(7)-)-methyltransferase (Staphylococcus aureus (strain MSSA476)).